We begin with the raw amino-acid sequence, 152 residues long: Regulatory protein RecX (152 aa).

It belongs to the RecX family.

The protein localises to the cytoplasm. Its function is as follows. Modulates RecA activity. This Chromobacterium violaceum (strain ATCC 12472 / DSM 30191 / JCM 1249 / CCUG 213 / NBRC 12614 / NCIMB 9131 / NCTC 9757 / MK) protein is Regulatory protein RecX.